The chain runs to 284 residues: 2-dehydro-3-deoxyphosphooctonate aldolase (284 aa).

Belongs to the KdsA family.

The protein localises to the cytoplasm. It catalyses the reaction D-arabinose 5-phosphate + phosphoenolpyruvate + H2O = 3-deoxy-alpha-D-manno-2-octulosonate-8-phosphate + phosphate. The protein operates within carbohydrate biosynthesis; 3-deoxy-D-manno-octulosonate biosynthesis; 3-deoxy-D-manno-octulosonate from D-ribulose 5-phosphate: step 2/3. It participates in bacterial outer membrane biogenesis; lipopolysaccharide biosynthesis. This chain is 2-dehydro-3-deoxyphosphooctonate aldolase, found in Photorhabdus laumondii subsp. laumondii (strain DSM 15139 / CIP 105565 / TT01) (Photorhabdus luminescens subsp. laumondii).